Consider the following 196-residue polypeptide: RNA annealing protein YRA2 (196 aa).

2 disordered regions span residues Met1–Gln63 and Asp143–Asn196. Residues Gln63 to Gln137 enclose the RRM domain. The span at Arg149–Gly159 shows a compositional bias: basic and acidic residues.

Belongs to the YRA1 family. Associates with mRNPs.

The protein resides in the nucleus. Involved in export of poly(A) mRNAs from the nucleus. Recruited to the coding sequences as well as poly-A sites of active genes. In Eremothecium gossypii (strain ATCC 10895 / CBS 109.51 / FGSC 9923 / NRRL Y-1056) (Yeast), this protein is RNA annealing protein YRA2 (YRA2).